We begin with the raw amino-acid sequence, 541 residues long: Glucose-6-phosphate isomerase (541 aa).

Residue E346 is the Proton donor of the active site. Catalysis depends on residues H377 and K506.

This sequence belongs to the GPI family.

It is found in the cytoplasm. The catalysed reaction is alpha-D-glucose 6-phosphate = beta-D-fructose 6-phosphate. Its pathway is carbohydrate biosynthesis; gluconeogenesis. The protein operates within carbohydrate degradation; glycolysis; D-glyceraldehyde 3-phosphate and glycerone phosphate from D-glucose: step 2/4. Catalyzes the reversible isomerization of glucose-6-phosphate to fructose-6-phosphate. The chain is Glucose-6-phosphate isomerase from Agrobacterium fabrum (strain C58 / ATCC 33970) (Agrobacterium tumefaciens (strain C58)).